A 454-amino-acid chain; its full sequence is tRNA modification GTPase MnmE (454 aa).

Residues Arg23, Glu80, and Lys120 each contribute to the (6S)-5-formyl-5,6,7,8-tetrahydrofolate site. Residues 216–377 (GMKVVIAGRP…LRNHLKQSMG (162 aa)) enclose the TrmE-type G domain. Residue Asn226 participates in K(+) binding. Residues 226–231 (NAGKSS), 245–251 (TDIAGTT), 270–273 (DTAG), 335–338 (NKAD), and 358–360 (SAR) each bind GTP. Mg(2+) is bound at residue Ser230. K(+)-binding residues include Thr245, Ile247, and Thr250. A Mg(2+)-binding site is contributed by Thr251. (6S)-5-formyl-5,6,7,8-tetrahydrofolate is bound at residue Lys454.

It belongs to the TRAFAC class TrmE-Era-EngA-EngB-Septin-like GTPase superfamily. TrmE GTPase family. As to quaternary structure, homodimer. Heterotetramer of two MnmE and two MnmG subunits. Requires K(+) as cofactor.

The protein localises to the cytoplasm. Functionally, exhibits a very high intrinsic GTPase hydrolysis rate. Involved in the addition of a carboxymethylaminomethyl (cmnm) group at the wobble position (U34) of certain tRNAs, forming tRNA-cmnm(5)s(2)U34. This Escherichia coli (strain 55989 / EAEC) protein is tRNA modification GTPase MnmE.